A 210-amino-acid chain; its full sequence is Uridine kinase (210 aa).

Position 12-19 (12-19) interacts with ATP; sequence GGSGGGKT.

The protein belongs to the uridine kinase family.

The protein resides in the cytoplasm. The catalysed reaction is uridine + ATP = UMP + ADP + H(+). It carries out the reaction cytidine + ATP = CMP + ADP + H(+). It participates in pyrimidine metabolism; CTP biosynthesis via salvage pathway; CTP from cytidine: step 1/3. It functions in the pathway pyrimidine metabolism; UMP biosynthesis via salvage pathway; UMP from uridine: step 1/1. The chain is Uridine kinase from Streptococcus uberis (strain ATCC BAA-854 / 0140J).